Here is a 260-residue protein sequence, read N- to C-terminus: Glutamate racemase (260 aa).

Substrate contacts are provided by residues 7 to 8 (DS) and 39 to 40 (YG). The active-site Proton donor/acceptor is the Cys71. Residue 72–73 (NT) coordinates substrate. The active-site Proton donor/acceptor is the Cys182. 183–184 (TH) contacts substrate.

It belongs to the aspartate/glutamate racemases family.

The catalysed reaction is L-glutamate = D-glutamate. Its pathway is cell wall biogenesis; peptidoglycan biosynthesis. Provides the (R)-glutamate required for cell wall biosynthesis. This is Glutamate racemase from Sulfurihydrogenibium sp. (strain YO3AOP1).